The following is a 340-amino-acid chain: S-adenosylmethionine:tRNA ribosyltransferase-isomerase (340 aa).

It belongs to the QueA family. As to quaternary structure, monomer.

The protein resides in the cytoplasm. The enzyme catalyses 7-aminomethyl-7-carbaguanosine(34) in tRNA + S-adenosyl-L-methionine = epoxyqueuosine(34) in tRNA + adenine + L-methionine + 2 H(+). The protein operates within tRNA modification; tRNA-queuosine biosynthesis. In terms of biological role, transfers and isomerizes the ribose moiety from AdoMet to the 7-aminomethyl group of 7-deazaguanine (preQ1-tRNA) to give epoxyqueuosine (oQ-tRNA). This chain is S-adenosylmethionine:tRNA ribosyltransferase-isomerase, found in Chromobacterium violaceum (strain ATCC 12472 / DSM 30191 / JCM 1249 / CCUG 213 / NBRC 12614 / NCIMB 9131 / NCTC 9757 / MK).